The following is a 230-amino-acid chain: Orotidine 5'-phosphate decarboxylase (230 aa).

Residues Asp10, Lys31, Asp58–Thr67, Thr117, Arg179, Gln188, Gly208, and Arg209 each bind substrate. Residue Lys60 is the Proton donor of the active site.

The protein belongs to the OMP decarboxylase family. Type 1 subfamily. Homodimer.

It catalyses the reaction orotidine 5'-phosphate + H(+) = UMP + CO2. It functions in the pathway pyrimidine metabolism; UMP biosynthesis via de novo pathway; UMP from orotate: step 2/2. Functionally, catalyzes the decarboxylation of orotidine 5'-monophosphate (OMP) to uridine 5'-monophosphate (UMP). The protein is Orotidine 5'-phosphate decarboxylase of Staphylococcus epidermidis (strain ATCC 12228 / FDA PCI 1200).